Reading from the N-terminus, the 66-residue chain is Large ribosomal subunit protein bL35 (66 aa).

Basic residues-rich tracts occupy residues 1-16 (MPKF…RFKR) and 23-45 (KRSH…RQLR). The tract at residues 1–66 (MPKFKTHRAS…RIRQMLSGLK (66 aa)) is disordered.

This sequence belongs to the bacterial ribosomal protein bL35 family.

The chain is Large ribosomal subunit protein bL35 from Latilactobacillus sakei subsp. sakei (strain 23K) (Lactobacillus sakei subsp. sakei).